Here is a 206-residue protein sequence, read N- to C-terminus: Large ribosomal subunit protein uL4 (206 aa).

Residues 63-93 (MYKQKGTGRARHHSARAPQFRGGGKAHGPVV) are disordered. Basic residues predominate over residues 64-77 (YKQKGTGRARHHSA).

Belongs to the universal ribosomal protein uL4 family. In terms of assembly, part of the 50S ribosomal subunit.

In terms of biological role, one of the primary rRNA binding proteins, this protein initially binds near the 5'-end of the 23S rRNA. It is important during the early stages of 50S assembly. It makes multiple contacts with different domains of the 23S rRNA in the assembled 50S subunit and ribosome. Functionally, forms part of the polypeptide exit tunnel. The polypeptide is Large ribosomal subunit protein uL4 (Sinorhizobium medicae (strain WSM419) (Ensifer medicae)).